Reading from the N-terminus, the 167-residue chain is Periplasmic nitrate reductase, electron transfer subunit (167 aa).

A signal peptide spans 1–34; sequence MRRAHRAGERVMMKRFGIALLAVAIAAGASSLTA. The tract at residues 40 to 65 is disordered; the sequence is GLHGPAPLNDEGPAPPMLPNRNTSER. Heme c-binding residues include His-79, Cys-93, Cys-96, His-97, His-114, Cys-133, Cys-136, and His-137.

Belongs to the NapB family. Component of the periplasmic nitrate reductase NapAB complex composed of NapA and NapB. In terms of processing, binds 2 heme C groups per subunit.

Its subcellular location is the periplasm. Electron transfer subunit of the periplasmic nitrate reductase complex NapAB. Receives electrons from the membrane-anchored tetraheme c-type NapC protein and transfers these to NapA subunit, thus allowing electron flow between membrane and periplasm. Essential for periplasmic nitrate reduction with nitrate as the terminal electron acceptor. This chain is Periplasmic nitrate reductase, electron transfer subunit, found in Bradyrhizobium japonicum.